The primary structure comprises 555 residues: Formate--tetrahydrofolate ligase (555 aa).

ATP is bound at residue 64–71; the sequence is TKAGIGKT.

This sequence belongs to the formate--tetrahydrofolate ligase family.

The catalysed reaction is (6S)-5,6,7,8-tetrahydrofolate + formate + ATP = (6R)-10-formyltetrahydrofolate + ADP + phosphate. Its pathway is one-carbon metabolism; tetrahydrofolate interconversion. The chain is Formate--tetrahydrofolate ligase from Bacteroides fragilis (strain ATCC 25285 / DSM 2151 / CCUG 4856 / JCM 11019 / LMG 10263 / NCTC 9343 / Onslow / VPI 2553 / EN-2).